The chain runs to 101 residues: Defensin-like protein 222 (101 aa).

The signal sequence occupies residues 1–21 (MRTIVLFSTLMILVLSCMSNA). 3 disulfides stabilise this stretch: Cys68/Cys85, Cys71/Cys90, and Cys75/Cys92.

This sequence belongs to the DEFL family.

It localises to the secreted. The polypeptide is Defensin-like protein 222 (Arabidopsis thaliana (Mouse-ear cress)).